A 757-amino-acid chain; its full sequence is 5-methyltetrahydropteroyltriglutamate--homocysteine methyltransferase (757 aa).

5-methyltetrahydropteroyltri-L-glutamate contacts are provided by residues 17–20 (RELK) and K115. Residues 430 to 432 (IGS) and E483 each bind L-homocysteine. Residues 430–432 (IGS) and E483 contribute to the L-methionine site. 5-methyltetrahydropteroyltri-L-glutamate contacts are provided by residues 514 to 515 (RC) and W560. D598 contributes to the L-homocysteine binding site. Position 598 (D598) interacts with L-methionine. E604 contributes to the 5-methyltetrahydropteroyltri-L-glutamate binding site. Positions 640, 642, and 664 each coordinate Zn(2+). H693 functions as the Proton donor in the catalytic mechanism. Residue C725 coordinates Zn(2+).

The protein belongs to the vitamin-B12 independent methionine synthase family. Zn(2+) is required as a cofactor.

The enzyme catalyses 5-methyltetrahydropteroyltri-L-glutamate + L-homocysteine = tetrahydropteroyltri-L-glutamate + L-methionine. It functions in the pathway amino-acid biosynthesis; L-methionine biosynthesis via de novo pathway; L-methionine from L-homocysteine (MetE route): step 1/1. In terms of biological role, catalyzes the transfer of a methyl group from 5-methyltetrahydrofolate to homocysteine resulting in methionine formation. This Buchnera aphidicola subsp. Schizaphis graminum (strain Sg) protein is 5-methyltetrahydropteroyltriglutamate--homocysteine methyltransferase.